Reading from the N-terminus, the 235-residue chain is Elongation factor Tu (235 aa).

The region spanning 1–125 is the tr-type G domain; the sequence is KNMITGAAQM…EVDEYIPTPE (125 aa). Residue 47-50 coordinates GTP; that stretch reads NKED.

Belongs to the TRAFAC class translation factor GTPase superfamily. Classic translation factor GTPase family. EF-Tu/EF-1A subfamily. Monomer.

It is found in the cytoplasm. It carries out the reaction GTP + H2O = GDP + phosphate + H(+). GTP hydrolase that promotes the GTP-dependent binding of aminoacyl-tRNA to the A-site of ribosomes during protein biosynthesis. The polypeptide is Elongation factor Tu (tufA) (Gloeothece membranacea (strain PCC 6501 / SAG 26.84)).